A 454-amino-acid polypeptide reads, in one-letter code: tRNA modification GTPase MnmE (454 aa).

Residues Arg23, Glu80, and Lys120 each contribute to the (6S)-5-formyl-5,6,7,8-tetrahydrofolate site. Positions 216–377 (GMRVVIAGRP…VREHLKACIG (162 aa)) constitute a TrmE-type G domain. Asn226 contacts K(+). GTP contacts are provided by residues 226 to 231 (NAGKSS), 245 to 251 (TEIAGTT), 270 to 273 (DTAG), and 335 to 338 (NKAD). Ser230 lines the Mg(2+) pocket. Thr245, Ile247, and Thr250 together coordinate K(+). Position 251 (Thr251) interacts with Mg(2+). Lys454 provides a ligand contact to (6S)-5-formyl-5,6,7,8-tetrahydrofolate.

The protein belongs to the TRAFAC class TrmE-Era-EngA-EngB-Septin-like GTPase superfamily. TrmE GTPase family. As to quaternary structure, homodimer. Heterotetramer of two MnmE and two MnmG subunits. The cofactor is K(+).

Its subcellular location is the cytoplasm. Exhibits a very high intrinsic GTPase hydrolysis rate. Involved in the addition of a carboxymethylaminomethyl (cmnm) group at the wobble position (U34) of certain tRNAs, forming tRNA-cmnm(5)s(2)U34. This is tRNA modification GTPase MnmE from Pseudoalteromonas translucida (strain TAC 125).